A 265-amino-acid polypeptide reads, in one-letter code: Mlc titration factor A (265 aa).

4 residues coordinate Zn(2+): His-111, His-148, His-152, and Glu-211.

Belongs to the MtfA family. As to quaternary structure, interacts with Mlc. Requires Zn(2+) as cofactor.

Its subcellular location is the cytoplasm. Its function is as follows. Involved in the modulation of the activity of the glucose-phosphotransferase system (glucose-PTS). Interacts with the transcriptional repressor Mlc, preventing its interaction with DNA and leading to the modulation of expression of genes regulated by Mlc, including ptsG, which encodes the PTS system glucose-specific EIICB component. Functionally, shows zinc-dependent metallopeptidase activity. The polypeptide is Mlc titration factor A (Escherichia coli O139:H28 (strain E24377A / ETEC)).